A 452-amino-acid polypeptide reads, in one-letter code: MDVIPSTTPGEAVRISAKRTAELFGPEYLMVTPSASNGSIGVSYRRKTEYEHVKELPPALAAKQAQAAAARSKRPKISSRSEGSGSGDKSGASTALVRRGGRASGAAGDDKPTSLIQRPSATRQQPPEWHAPWKLMRVISGHLGWVRSLAVEPNNEWFASGAGDRTIKIWNLATGALRLTLTGHISTVRGLAVSPRHPYLFSCGEDKMVKCWDLETNKVIRHYHGHLSGVYTLALHPRLDLLVTGGRDGVARVWDMRTRSNIHVLSGHTGTVADVQCQEADPQVITGSLDATVRLWDLAAGKTMGVLTHHKKGIRSLATHPREFTFASASTGSIKQWKCPGGEFMQNFEGHNAIINTLSVNEDNVLFSGGDNGSMSFWDWKTGYRYQTIDTTAQPGSLEAEAGIMTSTFDRTGLRLITGEADKTIKVWKQDDQATPETHPVTWAPTLGRQRY.

The span at 61–70 shows a compositional bias: low complexity; the sequence is AAKQAQAAAA. The segment at 61 to 129 is disordered; that stretch reads AAKQAQAAAA…SATRQQPPEW (69 aa). Residues 114–125 show a composition bias toward polar residues; that stretch reads SLIQRPSATRQQ. 7 WD repeats span residues 141 to 180, 183 to 222, 225 to 264, 267 to 308, 310 to 349, 350 to 388, and 399 to 438; these read GHLG…LRLT, GHIS…VIRH, GHLS…NIHV, GHTG…GVLT, HKKG…QNFE, GHNA…RYQT, and EAEA…TPET. The tract at residues 432–452 is disordered; sequence DQATPETHPVTWAPTLGRQRY.

The protein belongs to the WD repeat PRL1/PRL2 family. In terms of assembly, associated with the spliceosome.

The protein localises to the cytoplasm. The protein resides in the nucleus. In terms of biological role, involved in pre-mRNA splicing and required for cell cycle progression at G2/M. This chain is Pre-mRNA-splicing factor prp46 (prp46), found in Emericella nidulans (strain FGSC A4 / ATCC 38163 / CBS 112.46 / NRRL 194 / M139) (Aspergillus nidulans).